The sequence spans 87 residues: Large ribosomal subunit protein bL31B (87 aa).

The protein belongs to the bacterial ribosomal protein bL31 family. Type B subfamily. In terms of assembly, part of the 50S ribosomal subunit.

This chain is Large ribosomal subunit protein bL31B, found in Burkholderia ambifaria (strain MC40-6).